Reading from the N-terminus, the 337-residue chain is UDP-3-O-acylglucosamine N-acyltransferase 1 (337 aa).

The active-site Proton acceptor is His238.

This sequence belongs to the transferase hexapeptide repeat family. LpxD subfamily. Homotrimer.

The catalysed reaction is a UDP-3-O-[(3R)-3-hydroxyacyl]-alpha-D-glucosamine + a (3R)-hydroxyacyl-[ACP] = a UDP-2-N,3-O-bis[(3R)-3-hydroxyacyl]-alpha-D-glucosamine + holo-[ACP] + H(+). It functions in the pathway bacterial outer membrane biogenesis; LPS lipid A biosynthesis. Functionally, catalyzes the N-acylation of UDP-3-O-acylglucosamine using 3-hydroxyacyl-ACP as the acyl donor. Is involved in the biosynthesis of lipid A, a phosphorylated glycolipid that anchors the lipopolysaccharide to the outer membrane of the cell. This chain is UDP-3-O-acylglucosamine N-acyltransferase 1, found in Koribacter versatilis (strain Ellin345).